Consider the following 33-residue polypeptide: Dermaseptin-H8 (33 aa).

Leucine 33 is subject to Leucine amide.

Expressed by the skin glands.

The protein localises to the secreted. Has antimicrobial activity. This Pithecopus hypochondrialis (Orange-legged leaf frog) protein is Dermaseptin-H8.